The following is a 313-amino-acid chain: Glutathione synthetase (313 aa).

The ATP-grasp domain occupies 125–309 (KIFVTEFADL…IASLFWDAVE (185 aa)). 151–207 (RKEFGDIIVKPLYGNGGAGIFHLHEADRNLASLLEMFGQLFREPYIVQRYLKDVRKG) provides a ligand contact to ATP. Mg(2+) contacts are provided by glutamate 280 and asparagine 282.

This sequence belongs to the prokaryotic GSH synthase family. The cofactor is Mg(2+). Requires Mn(2+) as cofactor.

It catalyses the reaction gamma-L-glutamyl-L-cysteine + glycine + ATP = glutathione + ADP + phosphate + H(+). Its pathway is sulfur metabolism; glutathione biosynthesis; glutathione from L-cysteine and L-glutamate: step 2/2. In Mesorhizobium japonicum (strain LMG 29417 / CECT 9101 / MAFF 303099) (Mesorhizobium loti (strain MAFF 303099)), this protein is Glutathione synthetase.